Here is a 372-residue protein sequence, read N- to C-terminus: Beta sliding clamp (372 aa).

Belongs to the beta sliding clamp family. In terms of assembly, forms a ring-shaped head-to-tail homodimer around DNA which binds and tethers DNA polymerases and other proteins to the DNA. The DNA replisome complex has a single clamp-loading complex (3 tau and 1 each of delta, delta', psi and chi subunits) which binds 3 Pol III cores (1 core on the leading strand and 2 on the lagging strand) each with a beta sliding clamp dimer. Additional proteins in the replisome are other copies of gamma, psi and chi, Ssb, DNA helicase and RNA primase.

The protein resides in the cytoplasm. Functionally, confers DNA tethering and processivity to DNA polymerases and other proteins. Acts as a clamp, forming a ring around DNA (a reaction catalyzed by the clamp-loading complex) which diffuses in an ATP-independent manner freely and bidirectionally along dsDNA. Initially characterized for its ability to contact the catalytic subunit of DNA polymerase III (Pol III), a complex, multichain enzyme responsible for most of the replicative synthesis in bacteria; Pol III exhibits 3'-5' exonuclease proofreading activity. The beta chain is required for initiation of replication as well as for processivity of DNA replication. This Caulobacter vibrioides (strain ATCC 19089 / CIP 103742 / CB 15) (Caulobacter crescentus) protein is Beta sliding clamp (dnaN).